Here is a 270-residue protein sequence, read N- to C-terminus: Phospholysine phosphohistidine inorganic pyrophosphate phosphatase (270 aa).

Residues D17 and S19 each contribute to the Mg(2+) site. Residues 17–19 (DIS), 54–55 (TN), and K189 contribute to the substrate site. A Mg(2+)-binding site is contributed by D214.

The protein belongs to the HAD-like hydrolase superfamily. Homodimer. The cofactor is Mg(2+). As to expression, expressed in brain, and at lower levels in liver and kidney. Detected in thyroid (at protein level). Expressed in liver, kidney and moderately in brain.

It localises to the cytoplasm. Its subcellular location is the nucleus. The enzyme catalyses diphosphate + H2O = 2 phosphate + H(+). Functionally, phosphatase that hydrolyzes imidodiphosphate, 3-phosphohistidine and 6-phospholysine. Has broad substrate specificity and can also hydrolyze inorganic diphosphate, but with lower efficiency. This is Phospholysine phosphohistidine inorganic pyrophosphate phosphatase (LHPP) from Homo sapiens (Human).